Consider the following 176-residue polypeptide: Ribosome maturation factor RimM (176 aa).

One can recognise a PRC barrel domain in the interval glutamate 100–leucine 173.

It belongs to the RimM family. Binds ribosomal protein uS19.

It localises to the cytoplasm. In terms of biological role, an accessory protein needed during the final step in the assembly of 30S ribosomal subunit, possibly for assembly of the head region. Essential for efficient processing of 16S rRNA. May be needed both before and after RbfA during the maturation of 16S rRNA. It has affinity for free ribosomal 30S subunits but not for 70S ribosomes. The sequence is that of Ribosome maturation factor RimM from Prochlorococcus marinus (strain MIT 9313).